Consider the following 67-residue polypeptide: UPF0337 protein CC_0938 (67 aa).

Positions 37 to 67 (AAQKAKGDLQNKVGKAQDKARRRDQALNARL) are disordered. Residues 41–61 (AKGDLQNKVGKAQDKARRRDQ) are compositionally biased toward basic and acidic residues.

The protein belongs to the UPF0337 (CsbD) family.

In Caulobacter vibrioides (strain ATCC 19089 / CIP 103742 / CB 15) (Caulobacter crescentus), this protein is UPF0337 protein CC_0938.